The primary structure comprises 39 residues: Small basic protein 1 (39 aa).

Position 1 is a pyrrolidone carboxylic acid (Q1). Disulfide bonds link C6/C32, C10/C26, and C14/C31.

It localises to the secreted. This Anas platyrhynchos (Mallard) protein is Small basic protein 1.